The sequence spans 414 residues: MNTSRFISLFFHGSLVKRIIVGLVLGVVTALISPDLEPVLGFNLAEKVGILGSLFVKGLRAVAPILIFVLVIAAIANKKVGSKSNMKDIVMLYIIGTFGASIVAVLASFSFPMYIPLTTVADSLTPPNSVSEVFVVVISNIFANPIEALATSNFIGILAWAIALGIALRHAAQATKNAVNDLAEAVSKIVHLVISLAPFGIFGLVAATLADKGLGALWDYAHLLLVLLGSMLFMALVVNPFIVYWKIRRNPYPLVWKCISVSGLTAFFTRSSAANIPVNIDLAEELGLDEETYSVSIPLGATINMAGAAITVTVLTLAAVQTLGIPVSIPTAILLSVVSAVCACGASGVAGGSLLLIPLACSLFGISGDVAAQVIAVGFVIGVLQDSTETALNSSTDVLFTAAVCMAEERKNNA.

The next 9 membrane-spanning stretches (helical) occupy residues 19 to 39, 55 to 75, 89 to 109, 148 to 168, 189 to 209, 223 to 243, 297 to 317, 323 to 343, and 363 to 383; these read IIVG…LEPV, FVKG…IAAI, IVML…LASF, ALAT…GIAL, IVHL…AATL, LLLV…PFIV, IPLG…VLTL, LGIP…AVCA, and LFGI…VIGV.

It belongs to the dicarboxylate/amino acid:cation symporter (DAACS) (TC 2.A.23) family.

It localises to the cell inner membrane. It catalyses the reaction L-serine(in) + Na(+)(in) = L-serine(out) + Na(+)(out). The catalysed reaction is L-threonine(in) + Na(+)(in) = L-threonine(out) + Na(+)(out). In terms of biological role, involved in the import of serine and threonine into the cell, with the concomitant import of sodium (symport system). This Actinobacillus succinogenes (strain ATCC 55618 / DSM 22257 / CCUG 43843 / 130Z) protein is Serine/threonine transporter SstT.